The chain runs to 136 residues: Large ribosomal subunit protein uL16 (136 aa).

Belongs to the universal ribosomal protein uL16 family. In terms of assembly, part of the 50S ribosomal subunit.

Its function is as follows. Binds 23S rRNA and is also seen to make contacts with the A and possibly P site tRNAs. In Aliivibrio fischeri (strain ATCC 700601 / ES114) (Vibrio fischeri), this protein is Large ribosomal subunit protein uL16.